The chain runs to 313 residues: Protein-glutamine deamidase Cif (313 aa).

Residues cysteine 128, histidine 186, and glutamine 205 contribute to the active site.

Belongs to the Cif family.

It is found in the secreted. The protein localises to the host nucleus. The catalysed reaction is L-glutaminyl-[protein] + H2O = L-glutamyl-[protein] + NH4(+). Protein-glutamine deamidase effector that inhibits the host cell cycle and other key cellular processes such as the actin network and programmed-cell death. Acts by mediating the side chain deamidation of 'Gln-40' of host NEDD8, converting it to glutamate, thereby abolishing the activity of cullin-RING-based E3 ubiquitin-protein ligase complexes (CRL complexes). Inactivation of CRL complexes prevents ubiquitination and subsequent degradation of the cyclin-dependent kinase inhibitors CDKN1A/p21 and CDKN1B/p27, leading to G1 and G2 cell cycle arrests in host cells. Deamidation of 'Gln-40' of host NEDD8 also triggers macrophage-specific programmed cell death. Also able to catalyze deamidation of 'Gln-40' of host ubiquitin in vitro; however, NEDD8 constitutes the preferred substrate in vivo. The sequence is that of Protein-glutamine deamidase Cif from Photorhabdus laumondii subsp. laumondii (strain DSM 15139 / CIP 105565 / TT01) (Photorhabdus luminescens subsp. laumondii).